Reading from the N-terminus, the 393-residue chain is 4-O-methyl-glucuronoyl methylesterase (393 aa).

The signal sequence occupies residues 1-19 (MKLSAALLAIAAFANVASA). A Pyrrolidone carboxylic acid modification is found at Gln-20. Cys-22 and Cys-56 are joined by a disulfide. Asn-103 and Asn-168 each carry an N-linked (GlcNAc...) asparagine glycan. Positions 203–208 (GCSRNG) match the GXSYXG catalytic site motif motif. 2 cysteine pairs are disulfide-bonded: Cys-204–Cys-340 and Cys-236–Cys-312. Ser-205 (nucleophile) is an active-site residue. Positions 209, 251, 259, and 303 each coordinate substrate. His-339 serves as the catalytic Proton donor/acceptor.

It belongs to the carbohydrate esterase 15 (CE15) family.

Its subcellular location is the secreted. It catalyses the reaction a 4-O-methyl-alpha-D-glucuronosyl ester derivative + H2O = 4-O-methyl-alpha-D-glucuronate derivative + an alcohol + H(+). In terms of biological role, glucuronoyl esterase which may play a significant role in biomass degradation, as it is considered to disconnect hemicellulose from lignin through the hydrolysis of the ester bond between 4-O-methyl-D-glucuronic acid residues of glucuronoxylans and aromatic alcohols of lignin. This is 4-O-methyl-glucuronoyl methylesterase from Schizophyllum commune (strain H4-8 / FGSC 9210) (Split gill fungus).